A 274-amino-acid polypeptide reads, in one-letter code: MRLCGFEAGLDKPLFLIAGPCVIESEELALETAGYLKEMCSQLNIPFIYKSSFDKANRSSISSYRGPGFEKGLSILEKVKSQIGVPVLTDVHEDTPLFEVSSVVDVLQTPAFLCRQTNFIQKVAAMNKPVNIKKGQFLAPWEMKHVIAKAKAQGNEQIMACERGVSFGYNNLVSDMRSLVIMRETGCPVVYDATHSVQLPGGNNGVSGGQREFIPALARAAVAVGISGLFMETHPDPDNALSDGPNSWPLDKMKQLLESLKAADEVYKKYSTDF.

This sequence belongs to the KdsA family.

The protein resides in the cytoplasm. The enzyme catalyses D-arabinose 5-phosphate + phosphoenolpyruvate + H2O = 3-deoxy-alpha-D-manno-2-octulosonate-8-phosphate + phosphate. It participates in carbohydrate biosynthesis; 3-deoxy-D-manno-octulosonate biosynthesis; 3-deoxy-D-manno-octulosonate from D-ribulose 5-phosphate: step 2/3. The protein operates within bacterial outer membrane biogenesis; lipopolysaccharide biosynthesis. The chain is 2-dehydro-3-deoxyphosphooctonate aldolase from Legionella pneumophila (strain Lens).